We begin with the raw amino-acid sequence, 433 residues long: Serine--tRNA ligase (433 aa).

An L-serine-binding site is contributed by 235-237 (TSE). An ATP-binding site is contributed by 266 to 268 (RSE). Glu-289 contributes to the L-serine binding site. 353 to 356 (EISS) serves as a coordination point for ATP. Ser-388 lines the L-serine pocket.

This sequence belongs to the class-II aminoacyl-tRNA synthetase family. Type-1 seryl-tRNA synthetase subfamily. As to quaternary structure, homodimer. The tRNA molecule binds across the dimer.

The protein localises to the cytoplasm. The catalysed reaction is tRNA(Ser) + L-serine + ATP = L-seryl-tRNA(Ser) + AMP + diphosphate + H(+). The enzyme catalyses tRNA(Sec) + L-serine + ATP = L-seryl-tRNA(Sec) + AMP + diphosphate + H(+). It functions in the pathway aminoacyl-tRNA biosynthesis; selenocysteinyl-tRNA(Sec) biosynthesis; L-seryl-tRNA(Sec) from L-serine and tRNA(Sec): step 1/1. Its function is as follows. Catalyzes the attachment of serine to tRNA(Ser). Is also able to aminoacylate tRNA(Sec) with serine, to form the misacylated tRNA L-seryl-tRNA(Sec), which will be further converted into selenocysteinyl-tRNA(Sec). This chain is Serine--tRNA ligase, found in Burkholderia orbicola (strain MC0-3).